The primary structure comprises 1289 residues: Pesticidal crystal protein Cry5Ab (1289 aa).

The interval 1263 to 1289 (PLPTDDQNSEGNTASSTNSDTSMNNNQ) is disordered. Residues 1274-1289 (NTASSTNSDTSMNNNQ) show a composition bias toward low complexity.

This sequence belongs to the delta endotoxin family.

Its function is as follows. Endotoxin with nematicidal activity. The polypeptide is Pesticidal crystal protein Cry5Ab (cry5Ab) (Bacillus thuringiensis subsp. darmstadiensis).